The primary structure comprises 124 residues: Glutaredoxin-2 (124 aa).

A disulfide bridge links Cys13 with Cys16.

Belongs to the glutaredoxin family. In terms of assembly, homodimer.

It is found in the host cytoplasm. Its function is as follows. Glutaredoxin necessary for virion morphogenesis and virus replication. Functions as a thiol-disulfide transfer protein between membrane-associated OPG128 and substrates OPG095 or OPG053. The complete pathway for formation of disulfide bonds in intracellular virion membrane proteins sequentially involves oxidation of OPG072, OPG128 and OPG088. Exhibit thioltransferase and dehydroascorbate reductase activities in vitro. This chain is Glutaredoxin-2 (OPG088), found in Bos taurus (Bovine).